Consider the following 535-residue polypeptide: Probable glucomannan 4-beta-mannosyltransferase 14 (535 aa).

Residues 42–62 (QVVSVLLFVDAAYMAIVVAIV) traverse the membrane as a helical segment. Residue Asp-131 is part of the active site. Substrate-binding residues include Asp-193 and Asp-195. Residue Asp-287 is part of the active site. 4 helical membrane passes run 366 to 386 (IVVH…TVIF), 403 to 423 (ITIL…YWIL), 482 to 502 (IMVG…GRTY), and 503 to 523 (LYVY…GYVG).

Belongs to the glycosyltransferase 2 family. Plant cellulose synthase-like A subfamily.

The protein localises to the golgi apparatus membrane. The catalysed reaction is GDP-mannose + (glucomannan)n = GDP + (glucomannan)n+1.. Functionally, probable mannan synthase which consists of a 4-beta-mannosyltransferase activity on mannan using GDP-mannose. The beta-1,4-mannan product is the backbone for galactomannan synthesis by galactomannan galactosyltransferase. Galactomannan is a noncellulosic polysaccharides of plant cell wall. The polypeptide is Probable glucomannan 4-beta-mannosyltransferase 14 (Arabidopsis thaliana (Mouse-ear cress)).